A 92-amino-acid chain; its full sequence is UPF0235 protein CCA_00247 (92 aa).

The protein belongs to the UPF0235 family.

The chain is UPF0235 protein CCA_00247 from Chlamydia caviae (strain ATCC VR-813 / DSM 19441 / 03DC25 / GPIC) (Chlamydophila caviae).